Here is an 895-residue protein sequence, read N- to C-terminus: Catenin alpha-3 (895 aa).

The stretch at 74 to 107 (EMIAKEATVLKEELAAALQEVRKESKALKVSAER) forms a coiled coil. Ser160 is subject to Phosphoserine. Residues 325–379 (RERIIAECNAIRQALQDLLTEYMSNTGKTERSNTLNTAIVNMSKKTRDLRRQLRK) are a coiled coil. A Phosphothreonine modification is found at Thr361. The interval 635–660 (DVSDLEDDHEVRSHTSIQTEGKTDRA) is disordered. Phosphoserine occurs at positions 637 and 647. Thr649 is subject to Phosphothreonine.

Belongs to the vinculin/alpha-catenin family. Interacts with CTNNB1. Interacts with PKP2. As to expression, expressed in heart (at protein level).

It localises to the cytoplasm. The protein localises to the cytoskeleton. Its subcellular location is the cell junction. It is found in the desmosome. Functionally, may be involved in formation of stretch-resistant cell-cell adhesion complexes. The protein is Catenin alpha-3 of Mus musculus (Mouse).